A 344-amino-acid polypeptide reads, in one-letter code: Anthranilate phosphoribosyltransferase (344 aa).

5-phospho-alpha-D-ribose 1-diphosphate-binding positions include Gly-80, 83-84 (GD), Thr-88, 90-93 (NVST), 108-116 (KHGNRSVSS), and Ser-120. Residue Gly-80 coordinates anthranilate. Ser-92 contacts Mg(2+). Anthranilate is bound at residue Asn-111. Arg-166 contributes to the anthranilate binding site. 2 residues coordinate Mg(2+): Asp-225 and Glu-226.

This sequence belongs to the anthranilate phosphoribosyltransferase family. As to quaternary structure, homodimer. Mg(2+) is required as a cofactor.

It carries out the reaction N-(5-phospho-beta-D-ribosyl)anthranilate + diphosphate = 5-phospho-alpha-D-ribose 1-diphosphate + anthranilate. It participates in amino-acid biosynthesis; L-tryptophan biosynthesis; L-tryptophan from chorismate: step 2/5. In terms of biological role, catalyzes the transfer of the phosphoribosyl group of 5-phosphorylribose-1-pyrophosphate (PRPP) to anthranilate to yield N-(5'-phosphoribosyl)-anthranilate (PRA). The chain is Anthranilate phosphoribosyltransferase from Legionella pneumophila (strain Corby).